Reading from the N-terminus, the 1239-residue chain is Structural polyprotein (1239 aa).

Residues 15-95 (RPAPVQRYIP…KKKSKPGKRM (81 aa)) form a disordered region. A host transcription inhibition region spans residues 36–62 (RGPSQLQQLVAALGALALQPKQKQKRA). A compositionally biased stretch (low complexity) spans 38 to 56 (PSQLQQLVAALGALALQPK). A Nuclear localization signal motif is present at residues 55-91 (PKQKQKRAQKKPKKTPPPKPKKTQKPKKPTQKKKSKP). The span at 57 to 95 (QKQKRAQKKPKKTPPPKPKKTQKPKKPTQKKKSKPGKRM) shows a compositional bias: basic residues. The interval 78-106 (QKPKKPTQKKKSKPGKRMRNCMKIENDCI) is binding to the viral RNA. The segment at 91–105 (PGKRMRNCMKIENDC) is ribosome-binding. An intrachain disulfide couples cysteine 105 to cysteine 120. Positions 105 to 253 (CIFPVMLDGK…RITPEESVEW (149 aa)) constitute a Peptidase S3 domain. Histidine 131 serves as the catalytic Charge relay system. The Nuclear export signal motif lies at 136 to 146 (IDNPELAKLTF). An interaction with spike glycoprotein E2 region spans residues 147–152 (KKSSKY). Aspartate 153 serves as the catalytic Charge relay system. Positions 175–185 (PEGHYNWHHGA) are dimerization of the capsid protein. Serine 205 serves as the catalytic Charge relay system. The segment at 211-215 (DNTGK) is dimerization of the capsid protein. The tract at residues 254-269 (SAAALNITALCVLQNL) is functions as an uncleaved signal peptide for the precursor of protein E3/E2. Disulfide bonds link cysteine 264/cysteine 273, cysteine 278/cysteine 282, cysteine 281/cysteine 313, cysteine 339/cysteine 443, cysteine 342/cysteine 348, cysteine 411/cysteine 425, cysteine 471/cysteine 585, cysteine 519/cysteine 545, and cysteine 521/cysteine 539. An N-linked (GlcNAc...) asparagine; by host glycan is attached at asparagine 268. The Extracellular segment spans residues 322–686 (SVAHFEAYKA…HYYDLYPYWT (365 aa)). The helical transmembrane segment at 687–707 (ITVLASLGLLIVISSGFSCFL) threads the bilayer. Residues cysteine 705 and cysteine 708 are each lipidated (S-palmitoyl cysteine; by host). Topologically, residues 708-751 (CSVARTKCLTPYQLAPGAQLPTFIALLCCAKSARADTLDDFSYL) are cytoplasmic. The interval 710 to 714 (VARTK) is interaction with the capsid protein. Residues cysteine 715, cysteine 735, and cysteine 736 are each lipidated (S-palmitoyl cysteine; by host). An intrachain disulfide couples cysteine 715 to cysteine 736. Over 752–756 (WTNNQ) the chain is Extracellular. Residues 757-777 (AMFWLQLASPVAAFLCLSYCC) form a helical membrane-spanning segment. At 778 to 779 (RN) the chain is on the cytoplasmic side. A helical membrane pass occupies residues 780-800 (LACCMKIFLGISGLCVIATQA). The Extracellular portion of the chain corresponds to 801–1216 (YEHSTTMPNQ…WQWLAHTTSG (416 aa)). Cystine bridges form between cysteine 849–cysteine 914, cysteine 862–cysteine 894, cysteine 863–cysteine 896, and cysteine 868–cysteine 878. The interval 884–901 (VYPFMWGGAYCFCDTENS) is E1 fusion peptide loop. N-linked (GlcNAc...) asparagine; by host glycosylation is found at asparagine 941, asparagine 1009, and asparagine 1070. 4 disulfide bridges follow: cysteine 1059–cysteine 1071, cysteine 1101–cysteine 1176, cysteine 1106–cysteine 1180, and cysteine 1128–cysteine 1170. Residues 1217-1237 (PLTILVVAIIVVVVVSIVVCA) form a helical membrane-spanning segment. Cysteine 1236 is lipidated: S-palmitoyl cysteine; by host. Residues 1238–1239 (RH) lie on the Cytoplasmic side of the membrane.

As to quaternary structure, homodimer. Homomultimer. Interacts with host karyopherin KPNA4; this interaction allows the nuclear import of the viral capsid protein. Interacts with spike glycoprotein E2. Interacts with host IRAK1; the interaction leads to inhibition of IRAK1-dependent signaling. The precursor of protein E3/E2 and E1 form a heterodimer shortly after synthesis. In terms of assembly, interacts with spike glycoprotein E1. The precursor of protein E3/E2 and E1 form a heterodimer shortly after synthesis. Processing of the precursor of protein E3/E2 into E2 and E3 results in a heterodimer of the spike glycoproteins E2 and E1. Spike at virion surface are constituted of a trimer of E2-E1 heterodimers. After target cell attachment and endocytosis, E1 change conformation to form homotrimers. Interacts with 6K protein. As to quaternary structure, interacts with spike glycoprotein E1. Processing of the precursor of protein E3/E2 into E2 and E3 results in a heterodimer of the spike glycoproteins E2 and E1. Spike at virion surface are constituted of a trimer of E2-E1 heterodimers. Interacts with 6K protein. Interacts with host MXRA8; this interaction mediates virus entry. Interacts with the capsid protein. Oligomer. Interacts with spike glycoprotein E1. Interacts with spike glycoprotein E2. Structural polyprotein: Specific enzymatic cleavages in vivo yield mature proteins. Capsid protein is auto-cleaved during polyprotein translation, unmasking a signal peptide at the N-terminus of the precursor of E3/E2. The remaining polyprotein is then targeted to the host endoplasmic reticulum, where host signal peptidase cleaves it into pE2, 6K and E1 proteins. pE2 is further processed to mature E3 and E2 by host furin in trans-Golgi vesicle. In terms of processing, palmitoylated via thioester bonds. These palmitoylations may induce disruption of the C-terminus transmembrane. This would result in the reorientation of E2 C-terminus from lumenal to cytoplasmic side. Post-translationally, N-glycosylated. Palmitoylated via thioester bonds.

It is found in the virion. It localises to the host cytoplasm. The protein resides in the host cell membrane. Its subcellular location is the host nucleus. The protein localises to the virion membrane. It is found in the host Golgi apparatus. It localises to the host trans-Golgi network. The protein resides in the host endoplasmic reticulum. The catalysed reaction is Autocatalytic release of the core protein from the N-terminus of the togavirus structural polyprotein by hydrolysis of a -Trp-|-Ser- bond.. Functionally, forms an icosahedral capsid with a T=4 symmetry composed of 240 copies of the capsid protein surrounded by a lipid membrane through which penetrate 80 spikes composed of trimers of E1-E2 heterodimers. The capsid protein binds to the viral RNA genome at a site adjacent to a ribosome binding site for viral genome translation following genome release. Possesses a protease activity that results in its autocatalytic cleavage from the nascent structural protein. Following its self-cleavage, the capsid protein transiently associates with ribosomes, and within several minutes the protein binds to viral RNA and rapidly assembles into icosahedric core particles. The resulting nucleocapsid eventually associates with the cytoplasmic domain of the spike glycoprotein E2 at the cell membrane, leading to budding and formation of mature virions. In case of infection, new virions attach to target cells and after clathrin-mediated endocytosis their membrane fuses with the host endosomal membrane. This leads to the release of the nucleocapsid into the cytoplasm, followed by an uncoating event necessary for the genomic RNA to become accessible. The uncoating might be triggered by the interaction of capsid proteins with ribosomes. Binding of ribosomes would release the genomic RNA since the same region is genomic RNA-binding and ribosome-binding. Specifically inhibits interleukin-1 receptor-associated kinase 1/IRAK1-dependent signaling during viral entry, representing a means by which the alphaviruses may evade innate immune detection and activation prior to viral gene expression. Its function is as follows. Provides the signal sequence for the translocation of the precursor of protein E3/E2 to the host endoplasmic reticulum. Furin-cleaved E3 remains associated with spike glycoprotein E1 and mediates pH protection of the latter during the transport via the secretory pathway. After virion release from the host cell, the assembly protein E3 is gradually released in the extracellular space. In terms of biological role, plays a role in viral attachment to target host cell, by binding to the cell receptor MXRA8. Synthesized as a p62 precursor which is processed by furin at the cell membrane just before virion budding, giving rise to E2-E1 heterodimer. The p62-E1 heterodimer is stable, whereas E2-E1 is unstable and dissociate at low pH. p62 is processed at the last step, presumably to avoid E1 fusion activation before its final export to cell surface. E2 C-terminus contains a transitory transmembrane that would be disrupted by palmitoylation, resulting in reorientation of the C-terminal tail from lumenal to cytoplasmic side. This step is critical since E2 C-terminus is involved in budding by interacting with capsid proteins. This release of E2 C-terminus in cytoplasm occurs lately in protein export, and precludes premature assembly of particles at the endoplasmic reticulum membrane. Acts as a viroporin that participates in virus glycoprotein processing and transport to the plasma membrane, cell permeabilization and budding of viral particles. The cation channel is permeable to Na(+)&gt;K(+)&gt;Ca(2+) in vitro. Disrupts the calcium homeostasis of the cell, probably at the endoplasmic reticulum level. This leads to cytoplasmic calcium elevation. Because of its lipophilic properties, the 6K protein is postulated to influence the selection of lipids that interact with the transmembrane domains of the glycoproteins, which, in turn, affects the deformability of the bilayer required for the extreme curvature that occurs as budding proceeds. Present in low amount in virions, about 3% compared to viral glycoproteins. Functionally, class II viral fusion protein. Fusion activity is inactive as long as E1 is bound to E2 in mature virion. After virus attachment to target cell via host MXRA8 and endocytosis, acidification of the endosome induce dissociation of E1/E2 heterodimer and concomitant trimerization of the E1 subunits. This E1 trimer is fusion active, and promotes release of viral nucleocapsid in cytoplasm after endosome and viral membrane fusion. Efficient fusion requires the presence of cholesterol and sphingolipid in the target membrane. The chain is Structural polyprotein from Anopheles amictus (Common banded mosquito).